The following is a 541-amino-acid chain: Transcription factor STP2 (541 aa).

Residues 13 to 32 (VLTRIYDYLKALVQQVIVPN) are i. Positions 35–58 (DDKSSKSTPFEKLEPAKQNHPQKD) are disordered. The II stretch occupies residues 73–105 (LFPKQNNKQLSLTSKSSVVPCALNLDNLETPFS). The C2H2-type 1 zinc finger occupies 204–226 (YICHYCDARFRIRGYLTRHIKKH). A C2H2-type 2; atypical zinc finger spans residues 232 to 267 (YHCPFFDNSISQELRCHTSGGFSRRDTYKTHLKSRH). The C2H2-type 3; atypical zinc-finger motif lies at 284–309 (GVCTQCGEHFSTSESWVENHIEAGSC). Residues 452-462 (SSASSALSPLS) show a composition bias toward low complexity. The disordered stretch occupies residues 452–497 (SSASSALSPLSGDPITTTETNKSYPLDSEQSLLEPDKTEEDAINQS). Residues 465-482 (PITTTETNKSYPLDSEQS) are compositionally biased toward polar residues.

As to quaternary structure, interacts (via Region II) with SSY5; protease component of the SPS-sensor. Post-translationally, activated by the amino acid-induced proteolytic removal of an N-terminal inhibitory domain by serine protease SSY5, an intrinsic component of the SPS-sensor. Processing requires at least 2 components of the SCF(GRR1) ubiquitin ligase complex, namely the F-box protein GRR1 and the E2 enzyme CDC34, but does not depend on the proteasome. Processing is negatively regulated by the protein phosphatase 2A regulatory subunit RTS1.

It is found in the cell membrane. The protein localises to the nucleus. Transcription factor involved in the regulation of gene expression in response to extracellular amino acid levels. Synthesized as latent cytoplasmic precursor, which, upon a signal initiated by the plasma membrane SPS (SSY1-PTR3-SSY5) amino acid sensor system, becomes proteolytically activated and relocates to the nucleus, where it induces the expression of SPS-sensor-regulated genes, including the amino-acid permeases BAP2 and BAP3. Binding to promoters is facilitated by DAL81. Involved in the repression of genes subject to nitrogen catabolite repression and genes involved in stress response. Negatively regulated by inner nuclear membrane proteins ASI1, ASI2 and ASI3, which prevent unprocessed precursor forms that escape cytoplasmic anchoring from inducing SPS-sensor-regulated genes. The protein is Transcription factor STP2 (STP2) of Saccharomyces cerevisiae (strain ATCC 204508 / S288c) (Baker's yeast).